The chain runs to 85 residues: MYEKQVEITAENGLHTRPAAQFVKEAKAFDADITVTSNGKSASAKSLFKLQTLGLVKGTVVTISAEGPQAKEAVEHLVALMDQLH.

One can recognise an HPr domain in the interval 1 to 85; the sequence is MYEKQVEITA…HLVALMDQLH (85 aa). His-15 acts as the Pros-phosphohistidine intermediate in catalysis.

It belongs to the HPr family.

Its subcellular location is the cytoplasm. Functionally, general (non sugar-specific) component of the phosphoenolpyruvate-dependent sugar phosphotransferase system (sugar PTS). This major carbohydrate active-transport system catalyzes the phosphorylation of incoming sugar substrates concomitantly with their translocation across the cell membrane. The phosphoryl group from phosphoenolpyruvate (PEP) is transferred to the phosphoryl carrier protein HPr by enzyme I. Phospho-HPr then transfers it to the PTS EIIA domain. In Vibrio cholerae serotype O1 (strain ATCC 39315 / El Tor Inaba N16961), this protein is Phosphocarrier protein HPr (ptsH).